Consider the following 125-residue polypeptide: Phosphoribosyl-AMP cyclohydrolase (125 aa).

Asp-74 lines the Mg(2+) pocket. Cys-75 is a binding site for Zn(2+). Asp-76 and Asp-78 together coordinate Mg(2+). Positions 92 and 99 each coordinate Zn(2+).

This sequence belongs to the PRA-CH family. As to quaternary structure, homodimer. The cofactor is Mg(2+). It depends on Zn(2+) as a cofactor.

It localises to the cytoplasm. It catalyses the reaction 1-(5-phospho-beta-D-ribosyl)-5'-AMP + H2O = 1-(5-phospho-beta-D-ribosyl)-5-[(5-phospho-beta-D-ribosylamino)methylideneamino]imidazole-4-carboxamide. Its pathway is amino-acid biosynthesis; L-histidine biosynthesis; L-histidine from 5-phospho-alpha-D-ribose 1-diphosphate: step 3/9. In terms of biological role, catalyzes the hydrolysis of the adenine ring of phosphoribosyl-AMP. In Geobacter metallireducens (strain ATCC 53774 / DSM 7210 / GS-15), this protein is Phosphoribosyl-AMP cyclohydrolase.